The following is a 124-amino-acid chain: UPF0231 protein Sputcn32_0682 (124 aa).

Belongs to the UPF0231 family.

The chain is UPF0231 protein Sputcn32_0682 from Shewanella putrefaciens (strain CN-32 / ATCC BAA-453).